Here is a 162-residue protein sequence, read N- to C-terminus: Lymphocyte antigen 86 (162 aa).

An N-terminal signal peptide occupies residues 1–19 (MNGVAAALLVWILTSPSSS). Disulfide bonds link Cys33-Cys58, Cys45-Cys154, and Cys102-Cys112. Residue Asn96 is glycosylated (N-linked (GlcNAc...) asparagine). The N-linked (GlcNAc...) asparagine glycan is linked to Asn156.

As to quaternary structure, M-shaped tetramer of two CD180-LY86 heterodimers. Highly expressed in spleen, liver, brain and thymus, and at lower levels in kidney.

The protein localises to the secreted. The protein resides in the extracellular space. May cooperate with CD180 and TLR4 to mediate the innate immune response to bacterial lipopolysaccharide (LPS) and cytokine production. Important for efficient CD180 cell surface expression. This is Lymphocyte antigen 86 (Ly86) from Mus musculus (Mouse).